The chain runs to 151 residues: Zinc finger HIT domain-containing protein 3 (151 aa).

Zn(2+)-binding residues include Cys-11, Cys-14, Cys-22, Cys-25, Cys-30, Cys-34, His-38, and Cys-42. The HIT-type zinc finger occupies 11–42 (CVVCLEKPKYRCPTCRVPYCSVPCFQKHKEQC). Over residues 43 to 53 (SSEARPVEKRR) the composition is skewed to basic and acidic residues. The tract at residues 43 to 81 (SSEARPVEKRRAGPPVRSEESKDDDSSVADFLNSDEEED) is disordered. A compositionally biased stretch (acidic residues) spans 63-81 (SKDDDSSVADFLNSDEEED). Ser-76 is subject to Phosphoserine.

In terms of assembly, thyroid receptor interacting proteins (TRIPs) specifically interact with the ligand binding domain of the thyroid receptor (TR). Requires the presence of thyroid hormone for its interaction. Interacts with NUFIP1. Interacts (via HIT-type zinc finger) with the RUVBL1/RUVBL2 complex in the presence of ADP. As to expression, expressed in the cerebellum.

The protein localises to the cytoplasm. It is found in the nucleus. The sequence is that of Zinc finger HIT domain-containing protein 3 (Znhit3) from Mus musculus (Mouse).